Here is a 489-residue protein sequence, read N- to C-terminus: MAVFATQRLYIGGGYVDATSGETFDTLDPATGETLASVQQASAADVDRAVRSAKQGQREWAALTAMQRSRILRRAVDLLRERNDELAALETRDTGKPIAETLAVDIVTGADVIEYYAGLATAIEGQQIPLRPTSFVYTRREPLGVCAGIGAWNYPIQIACWKSAPALAAGNAMIFKPSEITPLSALKLAEIFTEAGVPAGVFNVVQGDGRVGAMLAAHPDIEKISFTGGVETGKKVMSMAGASSLKEVTMELGGKSPLLVFDDANLERAADIATSANFFSSGQVCTNGTRVFVQRGVLDRFEALVLERVKRIRVGKPTDAATNFGPLVSAAQLHKVLGYIESGKQEGARLVAGGKRLTEGHFAGGQYVEPTVFADCRDDMRIVREEIFGPVMSILVFDDEDEAIARANHTAYGLAAGVVTENLARAHRVIHRLEAGICWINTWGESPAEMPVGGYKQSGVGRENGITTLEHYTRIKSVQVELGPYQPVF.

K(+) is bound by residues T26 and D93. Residue 150 to 152 (GAW) participates in NAD(+) binding. Catalysis depends on K162, which acts as the Charge relay system. An NAD(+)-binding site is contributed by 176–179 (KPSE). I180 serves as a coordination point for K(+). Residue 229–232 (GVET) coordinates NAD(+). Residue L245 participates in K(+) binding. E251 acts as the Proton acceptor in catalysis. The NAD(+) site is built by G253, C285, and E386. Residue C285 is the Nucleophile of the active site. C285 carries the cysteine sulfenic acid (-SOH) modification. 2 residues coordinate K(+): K456 and G459. The Charge relay system role is filled by E463.

Belongs to the aldehyde dehydrogenase family. In terms of assembly, dimer of dimers. It depends on K(+) as a cofactor.

The catalysed reaction is betaine aldehyde + NAD(+) + H2O = glycine betaine + NADH + 2 H(+). Its pathway is amine and polyamine biosynthesis; betaine biosynthesis via choline pathway; betaine from betaine aldehyde: step 1/1. Functionally, involved in the biosynthesis of the osmoprotectant glycine betaine. Catalyzes the irreversible oxidation of betaine aldehyde to the corresponding acid. In Paraburkholderia phytofirmans (strain DSM 17436 / LMG 22146 / PsJN) (Burkholderia phytofirmans), this protein is Betaine aldehyde dehydrogenase.